A 99-amino-acid chain; its full sequence is Large ribosomal subunit protein bL21 (99 aa).

It belongs to the bacterial ribosomal protein bL21 family. In terms of assembly, part of the 50S ribosomal subunit. Contacts protein L20.

This protein binds to 23S rRNA in the presence of protein L20. The polypeptide is Large ribosomal subunit protein bL21 (Neorickettsia sennetsu (strain ATCC VR-367 / Miyayama) (Ehrlichia sennetsu)).